The chain runs to 407 residues: Probable tRNA sulfurtransferase (407 aa).

The THUMP domain occupies 61 to 165 (NEIIQRLSKV…MDAIYIYEKV (105 aa)). ATP-binding positions include 183 to 184 (ML), 208 to 209 (HF), Arg265, Gly287, and Gln296.

It belongs to the ThiI family.

Its subcellular location is the cytoplasm. It catalyses the reaction [ThiI sulfur-carrier protein]-S-sulfanyl-L-cysteine + a uridine in tRNA + 2 reduced [2Fe-2S]-[ferredoxin] + ATP + H(+) = [ThiI sulfur-carrier protein]-L-cysteine + a 4-thiouridine in tRNA + 2 oxidized [2Fe-2S]-[ferredoxin] + AMP + diphosphate. It carries out the reaction [ThiS sulfur-carrier protein]-C-terminal Gly-Gly-AMP + S-sulfanyl-L-cysteinyl-[cysteine desulfurase] + AH2 = [ThiS sulfur-carrier protein]-C-terminal-Gly-aminoethanethioate + L-cysteinyl-[cysteine desulfurase] + A + AMP + 2 H(+). It participates in cofactor biosynthesis; thiamine diphosphate biosynthesis. In terms of biological role, catalyzes the ATP-dependent transfer of a sulfur to tRNA to produce 4-thiouridine in position 8 of tRNAs, which functions as a near-UV photosensor. Also catalyzes the transfer of sulfur to the sulfur carrier protein ThiS, forming ThiS-thiocarboxylate. This is a step in the synthesis of thiazole, in the thiamine biosynthesis pathway. The sulfur is donated as persulfide by IscS. The protein is Probable tRNA sulfurtransferase of Staphylococcus epidermidis (strain ATCC 35984 / DSM 28319 / BCRC 17069 / CCUG 31568 / BM 3577 / RP62A).